We begin with the raw amino-acid sequence, 342 residues long: C-X-C chemokine receptor type 6 (342 aa).

Residues 1 to 32 lie on the Extracellular side of the membrane; it reads MAEHDYHEDYGFNSFNDSSQEEHQDFLQFSKV. N-linked (GlcNAc...) asparagine glycosylation occurs at N16. The helical transmembrane segment at 33–59 threads the bilayer; the sequence is FLPCMYLVVFVCGLVGNSLVLVISIFY. Topologically, residues 60–68 are cytoplasmic; the sequence is HKLQSLTDV. A helical transmembrane segment spans residues 69-89; the sequence is FLVNLPLADLVFVCTLPFWAY. Residues 90 to 103 are Extracellular-facing; it reads AGIHEWVFGQVMCK. C102 and C180 are oxidised to a cystine. A helical membrane pass occupies residues 104 to 125; it reads SLLGIYTINFYTSMLILTCITV. Residues 126–143 lie on the Cytoplasmic side of the membrane; that stretch reads DRFIVVVKATKAYNQQAK. The chain crosses the membrane as a helical span at residues 144-164; it reads RMTWGKVTSLLIWVISLLVSL. Residues 165–187 are Extracellular-facing; sequence PQIIYGNVFNLDKLICGYHDEAI. Residues 188–215 traverse the membrane as a helical segment; that stretch reads STVVLATQMTLGFFLPLLTMIVCYSVII. The Cytoplasmic segment spans residues 216–231; sequence KTLLHAGGFQKHRSLK. Residues 232-259 traverse the membrane as a helical segment; sequence IIFLVMAVFLLTQMPFNLMKLIRSTHWE. At 260–275 the chain is on the extracellular side; the sequence is YYAMTSFHYTIMVTEA. The chain crosses the membrane as a helical span at residues 276-293; it reads IAYLRACLNPVLYAFVSL. The Cytoplasmic segment spans residues 294-342; it reads KFRKNFWKLVKDIGCLPYLGVSHQWKSSEDNSKTFSASHNVEATSMFQL.

Belongs to the G-protein coupled receptor 1 family.

It is found in the cell membrane. Functionally, receptor for the C-X-C chemokine CXCL16. Used as a coreceptor by SIVs and by strains of HIV-2 and m-tropic HIV-1. The protein is C-X-C chemokine receptor type 6 (CXCR6) of Pan troglodytes (Chimpanzee).